A 78-amino-acid chain; its full sequence is DNA-directed RNA polymerase subunit Rpo5 (78 aa).

This sequence belongs to the archaeal Rpo5/eukaryotic RPB5 RNA polymerase subunit family. In terms of assembly, part of the RNA polymerase complex.

The protein resides in the cytoplasm. The enzyme catalyses RNA(n) + a ribonucleoside 5'-triphosphate = RNA(n+1) + diphosphate. Functionally, DNA-dependent RNA polymerase (RNAP) catalyzes the transcription of DNA into RNA using the four ribonucleoside triphosphates as substrates. This Methanosarcina acetivorans (strain ATCC 35395 / DSM 2834 / JCM 12185 / C2A) protein is DNA-directed RNA polymerase subunit Rpo5.